The chain runs to 149 residues: 3-hydroxyacyl-[acyl-carrier-protein] dehydratase FabZ (149 aa).

His53 is an active-site residue.

Belongs to the thioester dehydratase family. FabZ subfamily.

It localises to the cytoplasm. It carries out the reaction a (3R)-hydroxyacyl-[ACP] = a (2E)-enoyl-[ACP] + H2O. Functionally, involved in unsaturated fatty acids biosynthesis. Catalyzes the dehydration of short chain beta-hydroxyacyl-ACPs and long chain saturated and unsaturated beta-hydroxyacyl-ACPs. The polypeptide is 3-hydroxyacyl-[acyl-carrier-protein] dehydratase FabZ (Neisseria meningitidis serogroup C / serotype 2a (strain ATCC 700532 / DSM 15464 / FAM18)).